A 301-amino-acid polypeptide reads, in one-letter code: ADP-ribosyl cyclase/cyclic ADP-ribose hydrolase 1 (301 aa).

Topologically, residues 1 to 21 (MANCEFSPVSGDKPCCRLSRR) are cytoplasmic. Residues 22–43 (AQVCLGVCLLVLLILVVVVAVV) traverse the membrane as a helical; Signal-anchor for type II membrane protein segment. The Extracellular segment spans residues 44–301 (LPRWRQQWSG…PEDSSCLSGI (258 aa)). Intrachain disulfides connect C68/C83, C100/C181, and C161/C174. N101 carries an N-linked (GlcNAc...) asparagine glycan. The active site involves C120. N-linked (GlcNAc...) asparagine glycosylation is present at N121. Residue C202 is part of the active site. 2 N-linked (GlcNAc...) asparagine glycosylation sites follow: N210 and N220. 2 disulfide bridges follow: C255–C276 and C288–C297.

It belongs to the ADP-ribosyl cyclase family. As to quaternary structure, homodimer.

It localises to the cell surface. It is found in the membrane. The catalysed reaction is NAD(+) = cyclic ADP-beta-D-ribose + nicotinamide + H(+). The enzyme catalyses 2'-phospho-cyclic ADP-ribose + nicotinate = nicotinate-adenine dinucleotide phosphate. It catalyses the reaction NAD(+) + H2O = ADP-D-ribose + nicotinamide + H(+). It carries out the reaction nicotinate + NADP(+) = nicotinate-adenine dinucleotide phosphate + nicotinamide. ATP inhibits the cADPR hydrolyzing activity. Functionally, synthesizes cyclic ADP-ribose (cADPR), a second messenger for glucose-induced insulin secretion. Synthesizes the Ca(2+) mobilizer nicotinate-adenine dinucleotide phosphate, NAADP(+), from 2'-phospho-cADPR and nicotinic acid, as well as from NADP(+) and nicotinic acid. Also has cADPR hydrolase activity. This chain is ADP-ribosyl cyclase/cyclic ADP-ribose hydrolase 1 (CD38), found in Macaca fascicularis (Crab-eating macaque).